The chain runs to 575 residues: Sodium/calcium exchanger NCL2 (575 aa).

3 helical membrane passes run 69-89 (FLPCTTTAWGNLFLVLAYGFL), 112-132 (IVGGLFLPILGALPDALLILV), and 146-166 (VLIGMGLLAGSTVMLLTLLWG). Asn179 carries N-linked (GlcNAc...) asparagine glycosylation. Transmembrane regions (helical) follow at residues 210 to 230 (IMAISILPFIIVQIPKIFKLH) and 237 to 257 (VLIGLIVAALLLLSYCLYQVF). EF-hand domains follow at residues 297–332 (PNVSVIEKLFHRIDQDNDGKLERGELQAFIVGINFE) and 337–372 (NSNLAADQVMADFDTSRNHFIEKGEFVNGMLRWLDE). Asn298 carries N-linked (GlcNAc...) asparagine glycosylation. Ca(2+)-binding residues include Asp310, Asp312, Asp314, Lys316, Glu321, Asp350, Ser352, Asn354, and Glu361. The next 5 membrane-spanning stretches (helical) occupy residues 417-437 (WTCIKAILLLLLGTAMAAASA), 457-477 (FISFIVMPLATNSSEAVSAII), 494-514 (VYGGVTMNNTLCLAVFLALVY), 522-542 (FSSEVLIILLVCIIMGLFTSF), and 548-568 (LWTCFVAFLLYPLSLIMVYIL).

This sequence belongs to the Ca(2+):cation antiporter (CaCA) (TC 2.A.19) family.

It localises to the cell membrane. In terms of biological role, may function as a sodium/calcium exchanger (NCX) and participate in the maintenance of calcium homeostasis. May play a role abiotic stress responses. The sequence is that of Sodium/calcium exchanger NCL2 from Oryza sativa subsp. japonica (Rice).